The primary structure comprises 412 residues: Carboxypeptidase B1 (412 aa).

The N-terminal stretch at 1-18 is a signal peptide; sequence MIPRIVVVLLSVLAVVTA. The propeptide at 19-75 is activation peptide; the sequence is RRSYEGYKVYGIVPESPDEAEILYQIRQSNPDLDFWHLTKQPGDEARVLVAPKDQRS. The 291-residue stretch at 118–408 folds into the Peptidase M14 domain; the sequence is SYLRHNEINE…VGIKAMALKV (291 aa). The Zn(2+) site is built by His-175 and Glu-178. A peptide is bound at residue 175–178; the sequence is HARE. Asn-205 carries N-linked (GlcNAc...) asparagine glycosylation. A peptide is bound by residues Arg-230 and 246–247; that span reads NR. Cys-240 and Cys-263 are disulfide-bonded. His-299 provides a ligand contact to Zn(2+). A peptide contacts are provided by residues 300–301 and Tyr-351; that span reads SY. The active-site Proton donor/acceptor is Glu-374. Asn-395 carries N-linked (GlcNAc...) asparagine glycosylation.

This sequence belongs to the peptidase M14 family. As to quaternary structure, monomer. Interacts with Dengue virus type 2 (DENV2, MY89-88549 strain) envelope protein E. Interacts with Dengue virus envelope protein E type 3, type 2, type 4 and type 1 with decreasing strength. Requires Zn(2+) as cofactor. Expressed in midgut (at protein level).

The protein resides in the endoplasmic reticulum. The catalysed reaction is Preferential release of a C-terminal lysine or arginine amino acid.. Its activity is regulated as follows. Inhibited by S.tuberosum metallocarboxypeptidase inhibitor. In terms of biological role, carboxypeptidase that preferentially hydrolyzes arginine and lysine residues at the C-terminus. During infection by dengue virus, may play a role in preventing viral packaging, maturation, and release from the midgut. The sequence is that of Carboxypeptidase B1 from Aedes aegypti (Yellowfever mosquito).